Reading from the N-terminus, the 170-residue chain is Protein-lysine myristoyltransferase HlyC (170 aa).

Residues His23 and Asp92 contribute to the active site. His151 contacts heme.

It belongs to the RTX toxin acyltransferase family. As to quaternary structure, monomer. In terms of processing, proteolytically cleaved by the protease systems ClpAP, ClpXP and FtsH, leading to its degradation.

The protein resides in the cytoplasm. It carries out the reaction tetradecanoyl-[ACP] + L-lysyl-[protein] = N(6)-tetradecanoyl-L-lysyl-[protein] + holo-[ACP] + H(+). Its activity is regulated as follows. The acyltransferase activity is inhibited by heme. Its function is as follows. Protein-lysine myristoyltransferase that catalyzes myristoylation of the protoxin (HlyA) at two internal lysine residues, thereby converting it to the active toxin. The chain is Protein-lysine myristoyltransferase HlyC from Escherichia coli.